Here is a 110-residue protein sequence, read N- to C-terminus: Senescence associated gene 20 (110 aa).

The chain is Senescence associated gene 20 from Arabidopsis thaliana (Mouse-ear cress).